The primary structure comprises 87 residues: Small ribosomal subunit protein eS21 (87 aa).

This sequence belongs to the eukaryotic ribosomal protein eS21 family. In terms of assembly, component of the small ribosomal subunit. Mature ribosomes consist of a small (40S) and a large (60S) subunit. The 40S subunit contains about 33 different proteins and 1 molecule of RNA (18S). The 60S subunit contains about 49 different proteins and 3 molecules of RNA (25S, 5.8S and 5S).

The protein resides in the cytoplasm. Its function is as follows. Required for the processing of the 20S rRNA-precursor to mature 18S rRNA in a late step of the maturation of 40S ribosomal subunits. Has a physiological role leading to 18S rRNA stability. The polypeptide is Small ribosomal subunit protein eS21 (RPS21) (Candida glabrata (strain ATCC 2001 / BCRC 20586 / JCM 3761 / NBRC 0622 / NRRL Y-65 / CBS 138) (Yeast)).